The primary structure comprises 615 residues: 3-(3-hydroxy-phenyl)propionate/3-hydroxycinnamic acid hydroxylase 1 (615 aa).

Residues 1–20 (MRPAFEPAAGLGRAHPHETT) form a disordered region. Residues 27–56 (DVAIIGAGPVGLMIANILGLQGVRVVVVEK) and 294–304 (FRVKRILLAGD) each bind FAD.

This sequence belongs to the PheA/TfdB FAD monooxygenase family. FAD is required as a cofactor.

The enzyme catalyses 3-(3-hydroxyphenyl)propanoate + NADH + O2 + H(+) = 3-(2,3-dihydroxyphenyl)propanoate + NAD(+) + H2O. It carries out the reaction (2E)-3-(3-hydroxyphenyl)prop-2-enoate + NADH + O2 + H(+) = (2E)-3-(2,3-dihydroxyphenyl)prop-2-enoate + NAD(+) + H2O. It functions in the pathway aromatic compound metabolism; 3-phenylpropanoate degradation. Its function is as follows. Catalyzes the insertion of one atom of molecular oxygen into position 2 of the phenyl ring of 3-(3-hydroxyphenyl)propionate (3-HPP) and hydroxycinnamic acid (3HCI). This Burkholderia vietnamiensis (strain G4 / LMG 22486) (Burkholderia cepacia (strain R1808)) protein is 3-(3-hydroxy-phenyl)propionate/3-hydroxycinnamic acid hydroxylase 1.